The primary structure comprises 193 residues: Nucleoside triphosphate pyrophosphatase (193 aa).

Catalysis depends on D69, which acts as the Proton acceptor.

The protein belongs to the Maf family. The cofactor is a divalent metal cation.

It is found in the cytoplasm. The enzyme catalyses a ribonucleoside 5'-triphosphate + H2O = a ribonucleoside 5'-phosphate + diphosphate + H(+). The catalysed reaction is a 2'-deoxyribonucleoside 5'-triphosphate + H2O = a 2'-deoxyribonucleoside 5'-phosphate + diphosphate + H(+). Functionally, nucleoside triphosphate pyrophosphatase. May have a dual role in cell division arrest and in preventing the incorporation of modified nucleotides into cellular nucleic acids. The protein is Nucleoside triphosphate pyrophosphatase of Parasynechococcus marenigrum (strain WH8102).